The primary structure comprises 361 residues: Probable mannose-1-phosphate guanylyltransferase 1 (361 aa).

Leu-6 and Val-7 together coordinate GDP-alpha-D-mannose. Residues Gly-9, Gly-11, Thr-12, Arg-13, and Lys-23 each contribute to the diphosphate site. GDP-alpha-D-mannose is bound by residues Gly-85, Asn-109, Asp-111, Gly-146, and Asn-173.

This sequence belongs to the transferase hexapeptide repeat family.

It catalyses the reaction alpha-D-mannose 1-phosphate + GTP + H(+) = GDP-alpha-D-mannose + diphosphate. It functions in the pathway nucleotide-sugar biosynthesis; GDP-alpha-D-mannose biosynthesis; GDP-alpha-D-mannose from alpha-D-mannose 1-phosphate (GTP route): step 1/1. Its function is as follows. Catalyzes a reaction of the Smirnoff-Wheeler pathway, the major route to ascorbate biosynthesis in plants. In Oryza sativa subsp. japonica (Rice), this protein is Probable mannose-1-phosphate guanylyltransferase 1.